A 37-amino-acid chain; its full sequence is Esculentin-2B (37 aa).

Residues Cys-31 and Cys-37 are joined by a disulfide bond.

This sequence belongs to the frog skin active peptide (FSAP) family. Esculentin subfamily. In terms of tissue distribution, expressed by the skin glands.

Its subcellular location is the secreted. Shows antibacterial activity against representative Gram-negative and Gram-positive bacterial species, and hemolytic activity. The polypeptide is Esculentin-2B (Pelophylax lessonae (Pool frog)).